The chain runs to 836 residues: CUB domain-containing protein 1 (836 aa).

An N-terminal signal peptide occupies residues 1–29 (MAGLNCGVSIALLGVLLLGAARLPRGAEA). The Extracellular portion of the chain corresponds to 30–667 (FEIALPRESN…TLTPRTVDLT (638 aa)). N-linked (GlcNAc...) asparagine glycans are attached at residues Asn39, Asn122, Asn180, Asn205, Asn270, Asn310, and Asn386. Positions 417–544 (CTDHRYCQRK…VSFIPYFKEE (128 aa)) constitute a CUB domain. A disulfide bond links Cys476 and Cys499. Residues 668 to 688 (VILIAAVGGGVLLLSALGLII) traverse the membrane as a helical segment. Residues 689–836 (CCVKKKKKKT…NTQEPMEPAE (148 aa)) lie on the Cytoplasmic side of the membrane. Tyr734 is modified (phosphotyrosine). The disordered stretch occupies residues 776–836 (PPTICSRAPT…NTQEPMEPAE (61 aa)).

In terms of assembly, interacts with CDH2/N-cadherin, CDH3/P-cadherin, SDC1/syndecan-1, SDC4/syndecan-4 and the serine protease ST14/MT-SP1. Also interacts with SRC and PRKCG/protein kinase C gamma. Phosphorylated on tyrosine by kinases of the SRC family such as SRC and YES as well as by the protein kinase C gamma/PRKCG. Dephosphorylated by phosphotyrosine phosphatases. Also phosphorylated by suramin, a heparin analog. Tyrosine phosphorylated in response to dissociation of integrin alpha-6 beta-4 from laminin-5. Post-translationally, N-glycosylated. In terms of processing, a soluble form may also be produced by proteolytic cleavage at the cell surface (shedding). Another peptide of 80 kDa (p80) is present in cultured keratinocytes probably due to tryptic cleavage at an unidentified site on its N-terminal side. Converted to p80 by plasmin, a trypsin-like protease. As to expression, highly expressed in mitotic cells with low expression during interphase. Detected at highest levels in skeletal muscle and colon with lower levels in kidney, small intestine, placenta and lung. Up-regulated in a number of human tumor cell lines, as well as in colorectal cancer, breast carcinoma and lung cancer. Also expressed in cells with phenotypes reminiscent of mesenchymal stem cells and neural stem cells.

The protein resides in the cell membrane. It localises to the secreted. Its function is as follows. May be involved in cell adhesion and cell matrix association. May play a role in the regulation of anchorage versus migration or proliferation versus differentiation via its phosphorylation. May be a novel marker for leukemia diagnosis and for immature hematopoietic stem cell subsets. Belongs to the tetraspanin web involved in tumor progression and metastasis. The sequence is that of CUB domain-containing protein 1 (CDCP1) from Homo sapiens (Human).